The primary structure comprises 171 residues: Shikimate kinase (171 aa).

14 to 19 (GAGKST) provides a ligand contact to ATP. S18 lines the Mg(2+) pocket. The substrate site is built by D36, R60, and G82. R120 serves as a coordination point for ATP. R139 contacts substrate. Q156 provides a ligand contact to ATP.

Belongs to the shikimate kinase family. Monomer. Mg(2+) serves as cofactor.

The protein localises to the cytoplasm. It carries out the reaction shikimate + ATP = 3-phosphoshikimate + ADP + H(+). Its pathway is metabolic intermediate biosynthesis; chorismate biosynthesis; chorismate from D-erythrose 4-phosphate and phosphoenolpyruvate: step 5/7. Its function is as follows. Catalyzes the specific phosphorylation of the 3-hydroxyl group of shikimic acid using ATP as a cosubstrate. The polypeptide is Shikimate kinase (Shewanella oneidensis (strain ATCC 700550 / JCM 31522 / CIP 106686 / LMG 19005 / NCIMB 14063 / MR-1)).